The chain runs to 347 residues: Quinolinate synthase (347 aa).

Positions 47 and 68 each coordinate iminosuccinate. C113 contacts [4Fe-4S] cluster. Iminosuccinate contacts are provided by residues 139–141 (YAN) and S156. C200 serves as a coordination point for [4Fe-4S] cluster. Residues 226–228 (HPE) and T243 each bind iminosuccinate. C297 provides a ligand contact to [4Fe-4S] cluster.

The protein belongs to the quinolinate synthase family. Type 1 subfamily. [4Fe-4S] cluster is required as a cofactor.

It is found in the cytoplasm. The catalysed reaction is iminosuccinate + dihydroxyacetone phosphate = quinolinate + phosphate + 2 H2O + H(+). It participates in cofactor biosynthesis; NAD(+) biosynthesis; quinolinate from iminoaspartate: step 1/1. Catalyzes the condensation of iminoaspartate with dihydroxyacetone phosphate to form quinolinate. The polypeptide is Quinolinate synthase (Shigella boydii serotype 18 (strain CDC 3083-94 / BS512)).